Consider the following 477-residue polypeptide: RTX-I toxin determinant D (477 aa).

The Cytoplasmic segment spans residues 1–59; it reads MKTWLMGLYEFFQAYKTVWTEIWKIRHQLDTPDREKDENEFLPAHLELIETPVSKKPRL. Residues 60–80 traverse the membrane as a helical segment; it reads IAYLIMLFLFLALVISIVSHV. Topologically, residues 81-477 are periplasmic; the sequence is EIVATATGKL…ESVSESLRER (397 aa).

This sequence belongs to the membrane fusion protein (MFP) (TC 8.A.1) family.

The protein localises to the cell inner membrane. Functionally, involved in the transport of the toxin RTX-I as well as that of RTX-II. This is RTX-I toxin determinant D (apxID) from Actinobacillus pleuropneumoniae (Haemophilus pleuropneumoniae).